The chain runs to 312 residues: Ribosomal protein L11 methyltransferase (312 aa).

Threonine 160, glycine 181, aspartate 203, and asparagine 246 together coordinate S-adenosyl-L-methionine.

The protein belongs to the methyltransferase superfamily. PrmA family.

It is found in the cytoplasm. The catalysed reaction is L-lysyl-[protein] + 3 S-adenosyl-L-methionine = N(6),N(6),N(6)-trimethyl-L-lysyl-[protein] + 3 S-adenosyl-L-homocysteine + 3 H(+). In terms of biological role, methylates ribosomal protein L11. The protein is Ribosomal protein L11 methyltransferase of Staphylococcus haemolyticus (strain JCSC1435).